A 231-amino-acid chain; its full sequence is Probable transglycosylase SceD (231 aa).

The signal sequence occupies residues 1–27 (MKKTLLASSLAVGLGIVAGNAGHEAHA). Positions 93–116 (SAQAPATNNVEPSAVQANQVQSQE) are enriched in polar residues. The tract at residues 93 to 152 (SAQAPATNNVEPSAVQANQVQSQEVEAPQNAQTQQPQASTSNNSQVTATPTESKASEGSS) is disordered. The segment covering 119 to 137 (APQNAQTQQPQASTSNNSQ) has biased composition (low complexity). The span at 138–152 (VTATPTESKASEGSS) shows a compositional bias: polar residues.

This sequence belongs to the transglycosylase family. SceD subfamily.

Its subcellular location is the secreted. Is able to cleave peptidoglycan and affects clumping and separation of bacterial cells. This chain is Probable transglycosylase SceD (sceD), found in Staphylococcus aureus (strain Mu3 / ATCC 700698).